The following is a 384-amino-acid chain: Secreted LysM effector Blys7 (384 aa).

An N-terminal signal peptide occupies residues 1 to 18 (MQRHLLLGLAGLPALLSA). Positions 27-71 (FATVAANGETCDSMAATWGLDTATFQSLNPKAKCPEVIGGEQYCV) constitute a LysM 1 domain. The span at 81 to 106 (EPTTAPATTSTQTTTTTTTEVTSTTV) shows a compositional bias: low complexity. A disordered region spans residues 81–112 (EPTTAPATTSTQTTTTTTTEVTSTTVPGNGIT). In terms of domain architecture, LysM 2 spans 127–173 (KFYFVNKGDNCADITARYNLDLSDFLEWNPKAGNSCSGLWANAYACV). The tract at residues 183 to 206 (KPKPTSTSTKPPTATGNGIPTPLP) is disordered. Over residues 186-195 (PTSTSTKPPT) the composition is skewed to low complexity. The region spanning 217-263 (KFYLVKPGETCADIASRNGVSLSDFLQWNPHAGNACSGLWANAYACL) is the LysM 3 domain.

This sequence belongs to the secreted LysM effector family.

In terms of biological role, might have a role in sequestration of chitin oligosaccharides (breakdown products of fungal cell walls that are released during invasion and act as triggers of host immunity) to dampen host defense. The sequence is that of Secreted LysM effector Blys7 from Beauveria bassiana (strain ARSEF 2860) (White muscardine disease fungus).